A 151-amino-acid polypeptide reads, in one-letter code: Transcriptional regulator MraZ (151 aa).

SpoVT-AbrB domains are found at residues alanine 5–glutamate 52 and alanine 81–alanine 124.

Belongs to the MraZ family. As to quaternary structure, forms oligomers.

The protein localises to the cytoplasm. Its subcellular location is the nucleoid. This chain is Transcriptional regulator MraZ, found in Pseudomonas putida (strain W619).